A 137-amino-acid chain; its full sequence is Global transcriptional regulator Spx (137 aa).

Residues Cys10 and Cys13 are joined by a disulfide bond.

The protein belongs to the ArsC family. Spx subfamily. As to quaternary structure, interacts with the C-terminal domain of the alpha subunit of the RNAP.

It localises to the cytoplasm. Global transcriptional regulator that plays a key role in stress response and exerts either positive or negative regulation of genes. Acts by interacting with the C-terminal domain of the alpha subunit of the RNA polymerase (RNAP). This interaction can enhance binding of RNAP to the promoter region of target genes and stimulate their transcription, or block interaction of RNAP with activator. This Streptococcus mutans serotype c (strain ATCC 700610 / UA159) protein is Global transcriptional regulator Spx.